The following is a 438-amino-acid chain: 3-phosphoshikimate 1-carboxyvinyltransferase (438 aa).

3-phosphoshikimate contacts are provided by K26, S27, and R31. Residue K26 coordinates phosphoenolpyruvate. Phosphoenolpyruvate-binding residues include G99 and R127. 3-phosphoshikimate is bound by residues S170, S171, Q172, S199, E314, and H343. Q172 contributes to the phosphoenolpyruvate binding site. Residue E314 is the Proton acceptor of the active site. Phosphoenolpyruvate-binding residues include R347, R388, and K413.

This sequence belongs to the EPSP synthase family. Monomer.

The protein resides in the cytoplasm. It catalyses the reaction 3-phosphoshikimate + phosphoenolpyruvate = 5-O-(1-carboxyvinyl)-3-phosphoshikimate + phosphate. It participates in metabolic intermediate biosynthesis; chorismate biosynthesis; chorismate from D-erythrose 4-phosphate and phosphoenolpyruvate: step 6/7. Catalyzes the transfer of the enolpyruvyl moiety of phosphoenolpyruvate (PEP) to the 5-hydroxyl of shikimate-3-phosphate (S3P) to produce enolpyruvyl shikimate-3-phosphate and inorganic phosphate. In Mycobacterium sp. (strain JLS), this protein is 3-phosphoshikimate 1-carboxyvinyltransferase.